A 35-amino-acid polypeptide reads, in one-letter code: Photosystem I reaction center subunit Z (35 aa).

Residues 10–30 (LVIITTLVVPFMAAAALLFII) traverse the membrane as a helical segment.

In terms of assembly, the G.violaceus PSI reaction center is composed of one copy each of PsaA,B,C,D,E,F,L,M and Z, and forms trimeric complexes.

The protein localises to the cell inner membrane. The sequence is that of Photosystem I reaction center subunit Z (psaZ) from Gloeobacter violaceus (strain ATCC 29082 / PCC 7421).